The primary structure comprises 278 residues: Shikimate dehydrogenase (NADP(+)) (278 aa).

Shikimate is bound by residues 19 to 21 (SRS) and threonine 66. The Proton acceptor role is filled by lysine 70. Shikimate is bound by residues asparagine 91 and aspartate 106. NADP(+) contacts are provided by residues 129–133 (GAGGA) and phenylalanine 221. Residue tyrosine 223 participates in shikimate binding. Glycine 242 provides a ligand contact to NADP(+).

Belongs to the shikimate dehydrogenase family. In terms of assembly, homodimer.

The catalysed reaction is shikimate + NADP(+) = 3-dehydroshikimate + NADPH + H(+). It functions in the pathway metabolic intermediate biosynthesis; chorismate biosynthesis; chorismate from D-erythrose 4-phosphate and phosphoenolpyruvate: step 4/7. In terms of biological role, involved in the biosynthesis of the chorismate, which leads to the biosynthesis of aromatic amino acids. Catalyzes the reversible NADPH linked reduction of 3-dehydroshikimate (DHSA) to yield shikimate (SA). In Anaeromyxobacter dehalogenans (strain 2CP-1 / ATCC BAA-258), this protein is Shikimate dehydrogenase (NADP(+)).